Reading from the N-terminus, the 345-residue chain is Dihydroorotase (345 aa).

Positions 13 and 15 each coordinate Zn(2+). Residues 15 to 17 (HFR) and asparagine 41 contribute to the substrate site. Lysine 98, histidine 135, and histidine 173 together coordinate Zn(2+). Lysine 98 carries the N6-carboxylysine modification. Histidine 135 is a binding site for substrate. Position 218 (leucine 218) interacts with substrate. Zn(2+) is bound at residue aspartate 246. Aspartate 246 is an active-site residue. The substrate site is built by histidine 250 and alanine 262.

It belongs to the metallo-dependent hydrolases superfamily. DHOase family. Class II DHOase subfamily. As to quaternary structure, homodimer. Requires Zn(2+) as cofactor.

The enzyme catalyses (S)-dihydroorotate + H2O = N-carbamoyl-L-aspartate + H(+). The protein operates within pyrimidine metabolism; UMP biosynthesis via de novo pathway; (S)-dihydroorotate from bicarbonate: step 3/3. Functionally, catalyzes the reversible cyclization of carbamoyl aspartate to dihydroorotate. The polypeptide is Dihydroorotase (Shewanella frigidimarina (strain NCIMB 400)).